Here is an 87-residue protein sequence, read N- to C-terminus: Large ribosomal subunit protein bL27 (87 aa).

The disordered stretch occupies residues 1-25 (MAHKKGASSSRNGRDSNAQRLGVKR). The segment covering 7–19 (ASSSRNGRDSNAQ) has biased composition (polar residues).

Belongs to the bacterial ribosomal protein bL27 family.

The sequence is that of Large ribosomal subunit protein bL27 from Rhodococcus opacus (strain B4).